Here is a 1178-residue protein sequence, read N- to C-terminus: DNA-directed RNA polymerase subunit beta (1178 aa).

Residues 1–37 form a disordered region; sequence MLEGCILADSRQSKTAASPSPSRPQSSSNNSVPGAPN. The span at 18-33 shows a compositional bias: low complexity; it reads SPSPSRPQSSSNNSVP.

This sequence belongs to the RNA polymerase beta chain family. As to quaternary structure, the RNAP catalytic core consists of 2 alpha, 1 beta, 1 beta' and 1 omega subunit. When a sigma factor is associated with the core the holoenzyme is formed, which can initiate transcription.

It carries out the reaction RNA(n) + a ribonucleoside 5'-triphosphate = RNA(n+1) + diphosphate. Functionally, DNA-dependent RNA polymerase catalyzes the transcription of DNA into RNA using the four ribonucleoside triphosphates as substrates. The polypeptide is DNA-directed RNA polymerase subunit beta (Mycobacterium tuberculosis (strain CDC 1551 / Oshkosh)).